Consider the following 284-residue polypeptide: Tropomyosin (284 aa).

Residues 1-273 adopt a coiled-coil conformation; the sequence is MEAIKKKMQA…KEKYKSISDE (273 aa).

It belongs to the tropomyosin family. As to quaternary structure, homodimer. As to expression, ubiquitous, but especially prevalent in the anterior muscle bundles associated with legs. Expression in the mid and posterior regions is probably related to the numerous, small muscle bundles associated with the digestive and reproductive systems (at protein level).

Tropomyosin, in association with the troponin complex, plays a central role in the calcium dependent regulation of muscle contraction. The sequence is that of Tropomyosin from Psoroptes ovis (Sheep scab mite).